The chain runs to 288 residues: Acetyl-coenzyme A carboxylase carboxyl transferase subunit beta (288 aa).

Positions 32–288 constitute a CoA carboxyltransferase N-terminal domain; that stretch reads MWAKCPSCKR…LRLHSLEGWR (257 aa). Positions 36, 39, 54, and 57 each coordinate Zn(2+). The C4-type zinc finger occupies 36–57; sequence CPSCKRTLYTKEMGAEKICPHC.

The protein belongs to the AccD/PCCB family. As to quaternary structure, acetyl-CoA carboxylase is a heterohexamer composed of biotin carboxyl carrier protein (AccB), biotin carboxylase (AccC) and two subunits each of ACCase subunit alpha (AccA) and ACCase subunit beta (AccD). Zn(2+) is required as a cofactor.

It is found in the cytoplasm. It carries out the reaction N(6)-carboxybiotinyl-L-lysyl-[protein] + acetyl-CoA = N(6)-biotinyl-L-lysyl-[protein] + malonyl-CoA. It functions in the pathway lipid metabolism; malonyl-CoA biosynthesis; malonyl-CoA from acetyl-CoA: step 1/1. In terms of biological role, component of the acetyl coenzyme A carboxylase (ACC) complex. Biotin carboxylase (BC) catalyzes the carboxylation of biotin on its carrier protein (BCCP) and then the CO(2) group is transferred by the transcarboxylase to acetyl-CoA to form malonyl-CoA. This chain is Acetyl-coenzyme A carboxylase carboxyl transferase subunit beta, found in Enterococcus faecalis (strain ATCC 700802 / V583).